The chain runs to 291 residues: Transmembrane protein 41B (291 aa).

The segment at 1 to 38 (MAKGRVAERSQMGADHTTPVGDGAAGTRGPAAPGSRDY) is disordered. A Phosphothreonine modification is found at threonine 18. Low complexity predominate over residues 21–34 (GDGAAGTRGPAAPG). Residue serine 35 is modified to Phosphoserine. 6 helical membrane passes run 52 to 72 (MSLL…FLVY), 109 to 129 (FYVQ…TFAI), 147 to 169 (LALF…LSYL), 197 to 217 (LINY…FINI), 225 to 245 (PLKV…FVAI), and 262 to 282 (SWNS…PAIF). The VTT domain; required for its function in autophagy stretch occupies residues 140–251 (GFLYPFPLAL…FVAIKAGTTL (112 aa)).

It belongs to the TMEM41 family. Interacts with VMP1. Interacts with COPA, COPB1, VDAC1 and ERLIN2. Interacts with ATG2A. Interacts with SURF4.

Its subcellular location is the endoplasmic reticulum membrane. It is found in the endomembrane system. The catalysed reaction is a 1,2-diacyl-sn-glycero-3-phospho-L-serine(in) = a 1,2-diacyl-sn-glycero-3-phospho-L-serine(out). It catalyses the reaction cholesterol(in) = cholesterol(out). It carries out the reaction a 1,2-diacyl-sn-glycero-3-phosphocholine(in) = a 1,2-diacyl-sn-glycero-3-phosphocholine(out). The enzyme catalyses a 1,2-diacyl-sn-glycero-3-phosphoethanolamine(in) = a 1,2-diacyl-sn-glycero-3-phosphoethanolamine(out). Functionally, phospholipid scramblase involved in lipid homeostasis and membrane dynamics processes. Has phospholipid scramblase activity toward cholesterol and phosphatidylserine, as well as phosphatidylethanolamine and phosphatidylcholine. Required for autophagosome formation: participates in early stages of autophagosome biogenesis at the endoplasmic reticulum (ER) membrane by reequilibrating the leaflets of the ER as lipids are extracted by ATG2 (ATG2A or ATG2B) to mediate autophagosome assembly. In addition to autophagy, involved in other processes in which phospholipid scramblase activity is required. Required for normal motor neuron development. In Pongo abelii (Sumatran orangutan), this protein is Transmembrane protein 41B.